A 1920-amino-acid polypeptide reads, in one-letter code: Helicase SWR1 (1920 aa).

Polar residues-rich tracts occupy residues 1–31 and 56–68; these read MSNESSQLAASSRLPTTTNQVKTVITDTPFV and IPSTTHPNGHATQ. Disordered regions lie at residues 1 to 68 and 158 to 350; these read MSNE…HATQ and AISA…PSPL. Over residues 167–177 the composition is skewed to low complexity; it reads PSRPRSSLPSR. Residues 208-219 show a composition bias toward basic and acidic residues; it reads KGKERVGDELHA. The span at 324-339 shows a compositional bias: low complexity; it reads ASAVSSESASPVVEAP. One can recognise an HSA domain in the interval 467-540; it reads AKIIRIPPRK…EKERRRMGKE (74 aa). Disordered stretches follow at residues 590-727, 783-862, 876-966, and 988-1055; these read QIQG…PKET, QSPK…LADA, PVPE…QHLV, and GDGL…DIGP. Composition is skewed to acidic residues over residues 597-619, 634-654, and 662-674; these read SGEEEGEDSTSDNTDDSEGDDET, IGDDEEDVDVHDDDDEQQGEE, and ESDASDTESDENS. Over residues 701–726 the composition is skewed to basic and acidic residues; it reads FAEEDRGSSDTEQLTDNKNDGEEPKE. The segment covering 823-840 has biased composition (acidic residues); that stretch reads SNQDDQDEELDLEMEEAD. Over residues 841 to 852 the composition is skewed to basic and acidic residues; that stretch reads SAGRESGEGNRD. Positions 900–929 are enriched in polar residues; that stretch reads APTSTVSETLPSTKLSLAQPANQTDQSLTD. 2 stretches are compositionally biased toward acidic residues: residues 994-1005 and 1012-1036; these read VEEETMGDEDND and EEEDGHEYDSEEEYDEDEDEEEEGA. Residues 1037-1055 show a composition bias toward basic and acidic residues; it reads KEDNVDWDDRQDKEGDIGP. The 166-residue stretch at 1079–1244 folds into the Helicase ATP-binding domain; sequence ASLWSNNMNG…WSLLYFLMPG (166 aa). 1092–1099 contributes to the ATP binding site; that stretch reads DEMGLGKT. A DEAH box motif is present at residues 1195–1198; that stretch reads DEAH. Residues 1613 to 1766 enclose the Helicase C-terminal domain; sequence KLQKLFEMLR…KMVIQEGGFN (154 aa).

This sequence belongs to the SNF2/RAD54 helicase family. SWR1 subfamily. Component of the SWR1 chromatin-remodeling complex.

The protein resides in the nucleus. The catalysed reaction is ATP + H2O = ADP + phosphate + H(+). Its function is as follows. Catalytic component of the SWR1 complex which mediates the ATP-dependent exchange of histone H2A for the H2A variant HZT1 leading to transcriptional regulation of selected genes by chromatin remodeling. This is Helicase SWR1 (SWR1) from Cryptococcus neoformans var. neoformans serotype D (strain JEC21 / ATCC MYA-565) (Filobasidiella neoformans).